We begin with the raw amino-acid sequence, 379 residues long: 1-deoxy-D-xylulose 5-phosphate reductoisomerase (379 aa).

NADPH contacts are provided by Thr10, Gly11, Ser12, Ile13, Asn39, and Asn121. Lys122 is a binding site for 1-deoxy-D-xylulose 5-phosphate. An NADPH-binding site is contributed by Glu123. Residue Asp147 coordinates Mn(2+). Residues Ser148, Glu149, Ser173, and His196 each contribute to the 1-deoxy-D-xylulose 5-phosphate site. Glu149 contributes to the Mn(2+) binding site. Gly202 provides a ligand contact to NADPH. Ser209, Asn214, Lys215, and Glu218 together coordinate 1-deoxy-D-xylulose 5-phosphate. Glu218 provides a ligand contact to Mn(2+).

It belongs to the DXR family. Requires Mg(2+) as cofactor. Mn(2+) serves as cofactor.

It carries out the reaction 2-C-methyl-D-erythritol 4-phosphate + NADP(+) = 1-deoxy-D-xylulose 5-phosphate + NADPH + H(+). Its pathway is isoprenoid biosynthesis; isopentenyl diphosphate biosynthesis via DXP pathway; isopentenyl diphosphate from 1-deoxy-D-xylulose 5-phosphate: step 1/6. Functionally, catalyzes the NADPH-dependent rearrangement and reduction of 1-deoxy-D-xylulose-5-phosphate (DXP) to 2-C-methyl-D-erythritol 4-phosphate (MEP). The chain is 1-deoxy-D-xylulose 5-phosphate reductoisomerase from Chlamydia felis (strain Fe/C-56) (Chlamydophila felis).